We begin with the raw amino-acid sequence, 480 residues long: UDP-glucose 6-dehydrogenase 5 (480 aa).

NAD(+)-binding positions include 8–13, Asp33, Arg38, 86–90, 127–128, and Glu161; these read GAGYVG, VNTPT, and ST. Substrate-binding positions include 157–161, 216–223, and 256–269; these read EFLAE, KLAANAFL, and RIGP…VGFG. The active-site Nucleophile is Cys272. Position 272–275 (272–275) interacts with NAD(+); the sequence is CFQK. 334–335 is a binding site for substrate; that stretch reads FK. NAD(+) is bound at residue Arg342. Ser393 carries the phosphoserine modification. Arg447 is a binding site for substrate.

The protein belongs to the UDP-glucose/GDP-mannose dehydrogenase family.

It carries out the reaction UDP-alpha-D-glucose + 2 NAD(+) + H2O = UDP-alpha-D-glucuronate + 2 NADH + 3 H(+). Its pathway is nucleotide-sugar biosynthesis; UDP-alpha-D-glucuronate biosynthesis; UDP-alpha-D-glucuronate from UDP-alpha-D-glucose: step 1/1. Its function is as follows. Involved in the biosynthesis of UDP-glucuronic acid (UDP-GlcA), providing nucleotide sugars for cell-wall polymers. This chain is UDP-glucose 6-dehydrogenase 5 (UGD5), found in Oryza sativa subsp. japonica (Rice).